The following is a 76-amino-acid chain: Large ribosomal subunit protein bL31 (76 aa).

Belongs to the bacterial ribosomal protein bL31 family. Type A subfamily. Part of the 50S ribosomal subunit.

Functionally, binds the 23S rRNA. This is Large ribosomal subunit protein bL31 from Picosynechococcus sp. (strain ATCC 27264 / PCC 7002 / PR-6) (Agmenellum quadruplicatum).